Consider the following 429-residue polypeptide: Gamma-glutamyl phosphate reductase (429 aa).

This sequence belongs to the gamma-glutamyl phosphate reductase family.

Its subcellular location is the cytoplasm. It carries out the reaction L-glutamate 5-semialdehyde + phosphate + NADP(+) = L-glutamyl 5-phosphate + NADPH + H(+). The protein operates within amino-acid biosynthesis; L-proline biosynthesis; L-glutamate 5-semialdehyde from L-glutamate: step 2/2. Catalyzes the NADPH-dependent reduction of L-glutamate 5-phosphate into L-glutamate 5-semialdehyde and phosphate. The product spontaneously undergoes cyclization to form 1-pyrroline-5-carboxylate. This Bradyrhizobium sp. (strain BTAi1 / ATCC BAA-1182) protein is Gamma-glutamyl phosphate reductase.